A 442-amino-acid chain; its full sequence is tRNA modification GTPase MnmE (442 aa).

3 residues coordinate (6S)-5-formyl-5,6,7,8-tetrahydrofolate: arginine 22, glutamate 79, and lysine 119. Residues 216–366 (GIKTCLVGAP…LLEKIKSIFA (151 aa)) form the TrmE-type G domain. Position 226 (asparagine 226) interacts with K(+). Residues 226-231 (NSGKSS), 245-251 (SEIPGTT), and 270-273 (DTAG) each bind GTP. Serine 230 contacts Mg(2+). K(+) is bound by residues serine 245, isoleucine 247, and threonine 250. A Mg(2+)-binding site is contributed by threonine 251. Lysine 442 is a (6S)-5-formyl-5,6,7,8-tetrahydrofolate binding site.

Belongs to the TRAFAC class TrmE-Era-EngA-EngB-Septin-like GTPase superfamily. TrmE GTPase family. In terms of assembly, homodimer. Heterotetramer of two MnmE and two MnmG subunits. Requires K(+) as cofactor.

The protein resides in the cytoplasm. Its function is as follows. Exhibits a very high intrinsic GTPase hydrolysis rate. Involved in the addition of a carboxymethylaminomethyl (cmnm) group at the wobble position (U34) of certain tRNAs, forming tRNA-cmnm(5)s(2)U34. In Mesomycoplasma hyopneumoniae (strain 7448) (Mycoplasma hyopneumoniae), this protein is tRNA modification GTPase MnmE.